Here is a 254-residue protein sequence, read N- to C-terminus: Triosephosphate isomerase (254 aa).

9-11 (NWK) serves as a coordination point for substrate. H95 serves as the catalytic Electrophile. Catalysis depends on E167, which acts as the Proton acceptor. Substrate-binding positions include G173, S213, and 234-235 (GG).

This sequence belongs to the triosephosphate isomerase family. As to quaternary structure, homodimer.

The protein resides in the cytoplasm. The catalysed reaction is D-glyceraldehyde 3-phosphate = dihydroxyacetone phosphate. It participates in carbohydrate biosynthesis; gluconeogenesis. Its pathway is carbohydrate degradation; glycolysis; D-glyceraldehyde 3-phosphate from glycerone phosphate: step 1/1. Involved in the gluconeogenesis. Catalyzes stereospecifically the conversion of dihydroxyacetone phosphate (DHAP) to D-glyceraldehyde-3-phosphate (G3P). The protein is Triosephosphate isomerase of Roseiflexus sp. (strain RS-1).